Reading from the N-terminus, the 141-residue chain is Small ribosomal subunit protein uS12 (141 aa).

Belongs to the universal ribosomal protein uS12 family. In terms of assembly, part of the 30S ribosomal subunit.

Its function is as follows. With S4 and S5 plays an important role in translational accuracy. Located at the interface of the 30S and 50S subunits. This is Small ribosomal subunit protein uS12 from Methanobrevibacter smithii (strain ATCC 35061 / DSM 861 / OCM 144 / PS).